The chain runs to 456 residues: Bifunctional protein GlmU (456 aa).

The pyrophosphorylase stretch occupies residues 1 to 228 (MPQNTLNIVI…SYLAAGVNNK (228 aa)). UDP-N-acetyl-alpha-D-glucosamine is bound by residues 11-14 (LAAG), lysine 25, glutamine 75, 80-81 (GT), 102-104 (YGD), glycine 138, glutamate 153, asparagine 168, and asparagine 226. Aspartate 104 provides a ligand contact to Mg(2+). Mg(2+) is bound at residue asparagine 226. The interval 229-249 (LQLAELERIFQTEQAQELLKA) is linker. The tract at residues 250–456 (GVTLSDPARF…GWVRPEKDKQ (207 aa)) is N-acetyltransferase. Residues arginine 332 and lysine 350 each coordinate UDP-N-acetyl-alpha-D-glucosamine. The Proton acceptor role is filled by histidine 362. Residues tyrosine 365 and asparagine 376 each coordinate UDP-N-acetyl-alpha-D-glucosamine. Acetyl-CoA-binding positions include alanine 379, 385 to 386 (NY), serine 404, alanine 422, and arginine 439.

In the N-terminal section; belongs to the N-acetylglucosamine-1-phosphate uridyltransferase family. It in the C-terminal section; belongs to the transferase hexapeptide repeat family. Homotrimer. It depends on Mg(2+) as a cofactor.

The protein resides in the cytoplasm. The catalysed reaction is alpha-D-glucosamine 1-phosphate + acetyl-CoA = N-acetyl-alpha-D-glucosamine 1-phosphate + CoA + H(+). It carries out the reaction N-acetyl-alpha-D-glucosamine 1-phosphate + UTP + H(+) = UDP-N-acetyl-alpha-D-glucosamine + diphosphate. Its pathway is nucleotide-sugar biosynthesis; UDP-N-acetyl-alpha-D-glucosamine biosynthesis; N-acetyl-alpha-D-glucosamine 1-phosphate from alpha-D-glucosamine 6-phosphate (route II): step 2/2. It functions in the pathway nucleotide-sugar biosynthesis; UDP-N-acetyl-alpha-D-glucosamine biosynthesis; UDP-N-acetyl-alpha-D-glucosamine from N-acetyl-alpha-D-glucosamine 1-phosphate: step 1/1. It participates in bacterial outer membrane biogenesis; LPS lipid A biosynthesis. Catalyzes the last two sequential reactions in the de novo biosynthetic pathway for UDP-N-acetylglucosamine (UDP-GlcNAc). The C-terminal domain catalyzes the transfer of acetyl group from acetyl coenzyme A to glucosamine-1-phosphate (GlcN-1-P) to produce N-acetylglucosamine-1-phosphate (GlcNAc-1-P), which is converted into UDP-GlcNAc by the transfer of uridine 5-monophosphate (from uridine 5-triphosphate), a reaction catalyzed by the N-terminal domain. The sequence is that of Bifunctional protein GlmU from Neisseria meningitidis serogroup C / serotype 2a (strain ATCC 700532 / DSM 15464 / FAM18).